A 121-amino-acid polypeptide reads, in one-letter code: MTCGLVRIRLARFGRKNSPVYNIVVANSRKARDAKPIEVLGTYVPVPSPVTKRELKRGVVPIKDVKLDFDRTKYWIGVGAQPSETVTKLLRKAGILNDAWATSKNSNVNRKVVFERMETLE.

Belongs to the bacterial ribosomal protein bS16 family. In terms of assembly, component of the mitochondrial small ribosomal subunit (mt-SSU). Mature yeast 74S mitochondrial ribosomes consist of a small (37S) and a large (54S) subunit. The 37S small subunit contains a 15S ribosomal RNA (15S mt-rRNA) and 34 different proteins. The 54S large subunit contains a 21S rRNA (21S mt-rRNA) and 46 different proteins.

The protein resides in the mitochondrion. Functionally, component of the mitochondrial ribosome (mitoribosome), a dedicated translation machinery responsible for the synthesis of mitochondrial genome-encoded proteins, including at least some of the essential transmembrane subunits of the mitochondrial respiratory chain. The mitoribosomes are attached to the mitochondrial inner membrane and translation products are cotranslationally integrated into the membrane. The polypeptide is Small ribosomal subunit protein bS16m (MRPS16) (Saccharomyces cerevisiae (strain ATCC 204508 / S288c) (Baker's yeast)).